A 740-amino-acid chain; its full sequence is MQPPPRKVKVTQELRNIQGEQMTKLQAKHQAECDLLEDMRTFSQKKAAIEREYAQGIQKLASQYLKRDWPGIKTDDRNDYRSMYPVWKSFLEGTMQVAQSRINICENYKNFISEPARAVRSLKEQQLKRCVDQLTKIQTELQETVKDLVKGKKKYFETEQMAHAVREKADIEAKSKLSLFQSRISLQKASVKLKARRSECNTKATHARNDYLLTLAAANAHQDRYYQTDLVNIMKALDGNVYDHLKDYLIAFSRTELETCQAIQNTFQFLLENSSKVVRDYNLQLFLQENAVFHKPQPFQFQPCDSDTSRQLESETGTTEEHSLNKEARKWATRVAREHKNIVHQQRVLNELECHGVALSEQSRAELEQKIDEARESIRKAEIIKLKAEARLDLLKQIGVSVDTWLKSAMNQVMEELENERWARPPAVTSNGTLHSLNADAEREEGEEFEDNMDVFDDSSSSPSGTLRNYPLTCKVVYSYKASQPDELTIEEHEVLEVIEDGDMEDWVKARNKVGQVGYVPEKYLQFPTSNSLLSMLQSLAALDSRSHTSSNSTEAELVSGSLNGDASVCFVKALYDYEGQTDDELSFPEGAIIRILNKENQDDDGFWEGEFSGRIGVFPSVLVEELSASENGDTPWTREIQISPSPKPHTSLPPLPLYDQPPSSPYPSPDKRSSQFFPRSPSANENSLHAESPGFSQASRQTPDTSYGKLRPVRAAPPPPTQNHRRTTEKMEDVEITLV.

Residues 8-282 (VKVTQELRNI…NSSKVVRDYN (275 aa)) form the F-BAR domain. The disordered stretch occupies residues 303 to 323 (PCDSDTSRQLESETGTTEEHS). Basic and acidic residues predominate over residues 307-323 (DTSRQLESETGTTEEHS). Residues 356-397 (GVALSEQSRAELEQKIDEARESIRKAEIIKLKAEARLDLLKQ) are a coiled coil. SH3 domains lie at 469 to 530 (NYPL…FPTS) and 567 to 629 (ASVC…ELSA). The interval 567–629 (ASVCFVKALY…PSVLVEELSA (63 aa)) is required and sufficient for location at clathrin-coated pits. Residues 629–645 (ASENGDTPWTREIQISP) are compositionally biased toward polar residues. A disordered region spans residues 629 to 740 (ASENGDTPWT…KMEDVEITLV (112 aa)). Pro residues predominate over residues 646–657 (SPKPHTSLPPLP). Phosphoserine occurs at positions 675 and 681. Residues 675–706 (SQFFPRSPSANENSLHAESPGFSQASRQTPDT) show a composition bias toward polar residues.

Homodimer. Interacts (via SH3 domain 2) with ITSN1 (via SH3 domain 4). Recruited to clathrin-coated pits during a mid-to-late stage of assembly via interaction with ITSN1. Interacts (via SH3 domain 1) with WASL. Interacts with WAS. Interacts with CASK and MAGI1. CASK inhibits interaction with MAGI1. Post-translationally, phosphorylated. Phosphorylation on a Ser residue is important for recruitment to the cell membrane and for its role in promoting endocytosis. In terms of tissue distribution, detected in inner ear vestibula and in stereocilia in cochlear hair cell bundles (at protein level). Ubiquitous. Detected in testis, liver, brain cortex, cerebellum, kidney, organ of Corti, utricle, spiral ganglion, tongue and eye.

It is found in the cytoplasm. The protein localises to the cell junction. It localises to the membrane. Its subcellular location is the clathrin-coated pit. The protein resides in the cell membrane. It is found in the cell projection. The protein localises to the stereocilium. In terms of biological role, adapter protein that plays a role in endocytosis via clathrin-coated pits. Contributes to the internalization of cell surface receptors, such as integrin ITGB1 and transferrin receptor. Promotes endocytosis of EGFR in cancer cells, and thereby contributes to the down-regulation of EGFR signaling. Recruited to clathrin-coated pits during a mid-to-late stage of assembly, where it is required for normal progress from U-shaped intermediate stage pits to terminal, omega-shaped pits. Binds to membranes enriched in phosphatidylinositol 3,4-bisphosphate or phosphatidylinositol 3,4,5-trisphosphate. When bound to membranes, promotes actin polymerization via its interaction with WAS and/or WASL which leads to the activation of the Arp2/3 complex. Does not promote actin polymerisation in the absence of membranes. The sequence is that of F-BAR and double SH3 domains protein 2 (Fchsd2) from Mus musculus (Mouse).